The primary structure comprises 200 residues: Putative pseudouridine methyltransferase (200 aa).

Residues Met-133 and Cys-187 each coordinate S-adenosyl-L-methionine.

Belongs to the methyltransferase superfamily. TrmY family.

The protein resides in the cytoplasm. The sequence is that of Putative pseudouridine methyltransferase from Alcanivorax borkumensis (strain ATCC 700651 / DSM 11573 / NCIMB 13689 / SK2).